A 107-amino-acid polypeptide reads, in one-letter code: Iron-sulfur cluster assembly protein CyaY (107 aa).

This sequence belongs to the frataxin family.

In terms of biological role, involved in iron-sulfur (Fe-S) cluster assembly. May act as a regulator of Fe-S biogenesis. The polypeptide is Iron-sulfur cluster assembly protein CyaY (Neisseria meningitidis serogroup B (strain ATCC BAA-335 / MC58)).